A 1993-amino-acid chain; its full sequence is MEERKQETTNQAHVLFDRFVQATTCKGTLRAFQELCDHLELKPKDYRSFYHKLKSKLNYWKAKALWAKLDKRGSHKDYKKGKACTNTKCLIIGAGPCGLRTAIDLSLLGAKVVVIEKRDAFSRNNVLHLWPFTIHDLRGLGAKKFYGKFCAGAIDHISIRQLQLILLKVALILGIEIHVNVEFQGLVQPPEDQENERIGWRALVHPKTHPVSEYEFEVIIGGDGRRNTLEGFRRKEFRGKLAIAITANFINRNTTAEAKVEEISGVAFIFNQKFFQELREATGIDLENIVYYKDDTHYFVMTAKKQSLLDKGVILHDYTDTELLLSRENVDQEALLNYAREAADFSTQQQLPSLDFAINHYGQPDVAMFDFTCMYASENAALVREQNGHQLLVALVGDSLLEPFWPMGTGIARGFLAAMDSAWMVRSWSLGTSPLEVLAERESIYRLLPQTTPENVSKNFSQYSIDPVTRYPNININFLRPSQVRHLYDSGETKDIHLEMENMVNPRTTPKLTRNESVARSSKLLGWCQRQTEGYSGVNVTDLTMSWKSGLALCAIIHRYRPDLIDFDSLDEQNVEKNNQLAFDIAEKELGISPIMTGKEMASVGEPDKLSMVMYLTQFYEMFKDSLSSSDTLDLNAEEKAVLIASTKSPISFLSKLGQTISRKRSPKDKKEKDSDGAGKRRKTSQSEEEEPPRSYKGERPTLVSTLTDRRMDAAVGNQNKVKYMATQLLAKFEENAPAQSTGVRRQGSIKKEFPQNLGGSDTCYFCQKRVYVMERLSAEGKFFHRSCFKCEYCATTLRLSAYAYDIEDGKFYCKPHYCYRLSGYAQRKRPAVAPLSGKEVKGALQDGPTADANGLASVAASSAERSPGTSMNGLEEPSIAKRLRGTPERIELENYRRSVRQVEELEEVPEETQAEHNLSSVLDKGTEEDVASSSSESEMEEEEEEDDEDDHLPTSDLGGVPWKEAVRIHALLKGRSEEELEASKNFEPEEEEEEEEYEEEDEEYEEEEEEESSEAGNKRLQQIITAADPLAIQADVHWTHIREREAEERMLPTSESSTSRAPLDEDDLEEDADSEPAETEGEAAEDGDPGDTGAELDDQHWSDDIPSDAEAEHRLQSQAKVKAELELRVSENEEEKPSDAPKQEERGTSQVSSPSQPPEKQVGVFSPARSPGTEEAKSPLATKVKSPEEPLFPTPLLLREKPKAEVPEEQKAVLSPIRSQPVALPEARSPTSPTSLQPESLLAPPTPPTPPPTQLPICSQPQPSSDASIPSPTKSPIRFQPVPAKTSTPLTPLPVKSQGDPKDRLSGPLAVEEVLKRSDLVEEFWMKSAEIRRSLGLTPVDRSKGSEPSLPSPASKPISLKSYSVDKSPQDEGLCLLKPPSVPKRLGLPKSAGDQPPLLTPKSPSDKELRSSQEERRDLSSSSGLGLHDSSSNMKTLGSQSFNTSDSTMLTPPSSPPPPPPPNEEPATLRRKPHQTFERREASIIPPPTPASFMRPPREPAQPPREEVRKSFVESVDEIPFADDVEDTYDDKTEDSSLQEKFFTPPSCWSRSEKLQAKENGRLPPLEQDVPPQKRGLPLVSAEAKELAEERMRAREKSVKSQALRDAMAKQLSRMQAMEMVSSRSHTAQSQGKELGSESTRHPSLRGTQEPTLKHEATSEEILSPPSDSGGPDGSVTSSEGSSGKSKKRSSLFSPRRNKKEKKTKGEARPPEKPSPGLPEDVVAKPKSLWKSVFSGYKKDKKKKSDEKSCSSTPSSGATVDSGQRRASPMVRAELQLRRQLSFSEDSDLSSDDILERSSQKSKREPRTYTEEELSAKLTRRVQKAARRQAKQEELKRLHRAQIIQRQLEQVEEKQRQLEERGVAVEKALRGEAGMGKKDDPKLMQEWFKLVQEKNAMVRYESELMIFARELELEDRQSRLQQELRERMAVEDHLKTEGELSEEKKILNEMLEVVEQRDSLVALLEEQRLREKEEDKDLEAAMLCKGFSLDWS.

Positions 2-494 (EERKQETTNQ…RHLYDSGETK (493 aa)) are monooxygenase domain. FAD is bound by residues cysteine 97, 116 to 118 (EKR), 123 to 125 (RNN), phenylalanine 183, tyrosine 298, and aspartate 398. Positions 518–624 (VARSSKLLGW…YLTQFYEMFK (107 aa)) constitute a Calponin-homology (CH) domain. Phosphoserine is present on serine 649. The interval 658–704 (GQTISRKRSPKDKKEKDSDGAGKRRKTSQSEEEEPPRSYKGERPTLV) is disordered. Residues 669–679 (DKKEKDSDGAG) show a composition bias toward basic and acidic residues. Serine 685 and serine 687 each carry phosphoserine. The 63-residue stretch at 762-824 (DTCYFCQKRV…KPHYCYRLSG (63 aa)) folds into the LIM zinc-binding domain. Zn(2+) is bound by residues cysteine 764, cysteine 767, histidine 785, cysteine 788, cysteine 791, cysteine 794, cysteine 814, and histidine 817. The segment at 854-886 (NGLASVAASSAERSPGTSMNGLEEPSIAKRLRG) is disordered. Over residues 860-873 (AASSAERSPGTSMN) the composition is skewed to polar residues. A Phosphothreonine modification is found at threonine 887. 4 disordered regions span residues 905-1023 (ELEE…RLQQ), 1039-1309 (WTHI…LSGP), 1332-1546 (IRRS…FFTP), and 1559-1837 (KENG…EELK). A compositionally biased stretch (acidic residues) spans 938–951 (SEMEEEEEEDDEDD). Residues 975 to 988 (GRSEEELEASKNFE) show a composition bias toward basic and acidic residues. Serine 977 is subject to Phosphoserine. Positions 989-1014 (PEEEEEEEEYEEEDEEYEEEEEEESS) are enriched in acidic residues. The span at 1039 to 1051 (WTHIREREAEERM) shows a compositional bias: basic and acidic residues. The span at 1065-1090 (DEDDLEEDADSEPAETEGEAAEDGDP) shows a compositional bias: acidic residues. Residues 1111 to 1148 (EAEHRLQSQAKVKAELELRVSENEEEKPSDAPKQEERG) show a composition bias toward basic and acidic residues. Residues serine 1131 and serine 1187 each carry the phosphoserine modification. Basic and acidic residues predominate over residues 1199–1212 (LREKPKAEVPEEQK). The segment covering 1230-1239 (SPTSPTSLQP) has biased composition (polar residues). Over residues 1245 to 1255 (PPTPPTPPPTQ) the composition is skewed to pro residues. The segment covering 1257–1275 (PICSQPQPSSDASIPSPTK) has biased composition (polar residues). Position 1272 is a phosphoserine (serine 1272). Threonine 1274 bears the Phosphothreonine mark. A phosphoserine mark is found at serine 1276 and serine 1335. Threonine 1339 is subject to Phosphothreonine. Residues serine 1369 and serine 1382 each carry the phosphoserine modification. Residues 1405-1420 (PSDKELRSSQEERRDL) show a composition bias toward basic and acidic residues. Residues 1421–1433 (SSSSGLGLHDSSS) are compositionally biased toward low complexity. Serine 1431 is subject to Phosphoserine. Positions 1434-1452 (NMKTLGSQSFNTSDSTMLT) are enriched in polar residues. Threonine 1452 is subject to Phosphothreonine. The segment covering 1454–1465 (PSSPPPPPPPNE) has biased composition (pro residues). Over residues 1516-1530 (SVDEIPFADDVEDTY) the composition is skewed to acidic residues. A compositionally biased stretch (basic and acidic residues) spans 1584-1600 (EAKELAEERMRAREKSV). Polar residues predominate over residues 1623–1633 (SSRSHTAQSQG). Serine 1640 carries the phosphoserine modification. A compositionally biased stretch (low complexity) spans 1665 to 1685 (SPPSDSGGPDGSVTSSEGSSG). The span at 1686 to 1704 (KSKKRSSLFSPRRNKKEKK) shows a compositional bias: basic residues. Phosphoserine occurs at positions 1692 and 1695. Residues 1754 to 1763 (TPSSGATVDS) are compositionally biased toward polar residues. Basic and acidic residues predominate over residues 1795 to 1811 (ILERSSQKSKREPRTYT). Residues 1817–1983 (AKLTRRVQKA…EEDKDLEAAM (167 aa)) are a coiled coil. The span at 1819-1830 (LTRRVQKAARRQ) shows a compositional bias: basic residues. The bMERB domain occupies 1832–1981 (KQEELKRLHR…EKEEDKDLEA (150 aa)). Serine 1903 carries the phosphoserine modification.

The protein belongs to the Mical family. In terms of assembly, interacts with RAB1B, RAB8A, RAB10, RAB13 and RAB15 (in their GTP-bound forms); binding to RAB1B is of low affinity compared to other Rab proteins; at least in case of RAB8A can bind 2 molecules of RAB8A simultaneously through a high and a low affinity binding site, respectively. Interacts with ERC1 and RAB8A; may bridge ERC1 with RAB8A. Interacts with KIF23 and ERC1; enhances the interaction between KIF23 and ERC1. Interacts with NINL. Requires FAD as cofactor.

The protein localises to the cytoplasm. It localises to the cell cortex. Its subcellular location is the cytoskeleton. The protein resides in the nucleus. It is found in the midbody. The protein localises to the spindle. It localises to the cilium basal body. The catalysed reaction is L-methionyl-[F-actin] + NADPH + O2 + H(+) = L-methionyl-(R)-S-oxide-[F-actin] + NADP(+) + H2O. Monooxygenase that promotes depolymerization of F-actin by mediating oxidation of specific methionine residues on actin to form methionine-sulfoxide, resulting in actin filament disassembly and preventing repolymerization. In the absence of actin, it also functions as a NADPH oxidase producing H(2)O(2). Seems to act as Rab effector protein and play a role in vesicle trafficking. Involved in exocytic vesicles tethering and fusion: the monooxygenase activity is required for this process and implicates RAB8A associated with exocytotic vesicles. Required for cytokinesis. Contributes to stabilization and/or maturation of the intercellular bridge independently of its monooxygenase activity. Promotes recruitment of Rab8 and ERC1 to the intercellular bridge, and together these proteins are proposed to function in timely abscission. The chain is [F-actin]-monooxygenase MICAL3 (Mical3) from Mus musculus (Mouse).